We begin with the raw amino-acid sequence, 115 residues long: Aspartate 1-decarboxylase (115 aa).

Catalysis depends on S25, which acts as the Schiff-base intermediate with substrate; via pyruvic acid. S25 is modified (pyruvic acid (Ser)). Residue T57 participates in substrate binding. Catalysis depends on Y58, which acts as the Proton donor. 73–75 lines the substrate pocket; the sequence is GPA.

It belongs to the PanD family. As to quaternary structure, heterooctamer of four alpha and four beta subunits. It depends on pyruvate as a cofactor. Post-translationally, is synthesized initially as an inactive proenzyme, which is activated by self-cleavage at a specific serine bond to produce a beta-subunit with a hydroxyl group at its C-terminus and an alpha-subunit with a pyruvoyl group at its N-terminus.

The protein localises to the cytoplasm. The enzyme catalyses L-aspartate + H(+) = beta-alanine + CO2. It functions in the pathway cofactor biosynthesis; (R)-pantothenate biosynthesis; beta-alanine from L-aspartate: step 1/1. Functionally, catalyzes the pyruvoyl-dependent decarboxylation of aspartate to produce beta-alanine. In Cytophaga hutchinsonii (strain ATCC 33406 / DSM 1761 / CIP 103989 / NBRC 15051 / NCIMB 9469 / D465), this protein is Aspartate 1-decarboxylase.